The sequence spans 285 residues: NAD kinase (285 aa).

Catalysis depends on aspartate 64, which acts as the Proton acceptor. Residues 64–65 (DG), 138–139 (ND), arginine 149, arginine 166, aspartate 168, leucine 176, 179–184 (SGYTIS), and glutamine 238 each bind NAD(+).

This sequence belongs to the NAD kinase family. A divalent metal cation is required as a cofactor.

The protein localises to the cytoplasm. It carries out the reaction NAD(+) + ATP = ADP + NADP(+) + H(+). Its function is as follows. Involved in the regulation of the intracellular balance of NAD and NADP, and is a key enzyme in the biosynthesis of NADP. Catalyzes specifically the phosphorylation on 2'-hydroxyl of the adenosine moiety of NAD to yield NADP. This is NAD kinase from Lawsonia intracellularis (strain PHE/MN1-00).